The sequence spans 381 residues: Probable serine/threonine-protein kinase PBL25 (381 aa).

A lipid anchor (S-palmitoyl cysteine) is attached at Cys3. The segment at 16-41 (GSSMPAPYKQPNSPKRTTGEVVAKNA) is disordered. Phosphothreonine is present on Thr54. The Protein kinase domain maps to 65–342 (FRQECLIGEG…SDVITALSFL (278 aa)). ATP-binding positions include 71–79 (IGEGGFGRV) and Lys94. Residue Tyr139 is modified to Phosphotyrosine. Asp192 acts as the Proton acceptor in catalysis. A phosphoserine mark is found at Ser196 and Ser226. Residue Thr232 is modified to Phosphothreonine. The residue at position 240 (Tyr240) is a Phosphotyrosine. Residues 347–381 (NSSNTGSNHLQQNRSNKYQDAVQWDSSPRYANSQM) form a disordered region. The segment covering 355 to 381 (HLQQNRSNKYQDAVQWDSSPRYANSQM) has biased composition (polar residues).

The protein belongs to the protein kinase superfamily. Ser/Thr protein kinase family.

It is found in the cell membrane. The catalysed reaction is L-seryl-[protein] + ATP = O-phospho-L-seryl-[protein] + ADP + H(+). It catalyses the reaction L-threonyl-[protein] + ATP = O-phospho-L-threonyl-[protein] + ADP + H(+). May be involved in plant defense signaling. This Arabidopsis thaliana (Mouse-ear cress) protein is Probable serine/threonine-protein kinase PBL25.